Reading from the N-terminus, the 357-residue chain is 3-isopropylmalate dehydrogenase (357 aa).

Gly75–Glu88 lines the NAD(+) pocket. 4 residues coordinate substrate: Arg96, Arg106, Arg134, and Asp222. Asp222, Asp246, and Asp250 together coordinate Mg(2+). Gly279–Asn291 lines the NAD(+) pocket.

Belongs to the isocitrate and isopropylmalate dehydrogenases family. LeuB type 1 subfamily. Homodimer. It depends on Mg(2+) as a cofactor. Mn(2+) serves as cofactor.

Its subcellular location is the cytoplasm. The enzyme catalyses (2R,3S)-3-isopropylmalate + NAD(+) = 4-methyl-2-oxopentanoate + CO2 + NADH. The protein operates within amino-acid biosynthesis; L-leucine biosynthesis; L-leucine from 3-methyl-2-oxobutanoate: step 3/4. In terms of biological role, catalyzes the oxidation of 3-carboxy-2-hydroxy-4-methylpentanoate (3-isopropylmalate) to 3-carboxy-4-methyl-2-oxopentanoate. The product decarboxylates to 4-methyl-2 oxopentanoate. In Moorella thermoacetica (strain ATCC 39073 / JCM 9320), this protein is 3-isopropylmalate dehydrogenase.